Reading from the N-terminus, the 266-residue chain is GATA zinc finger domain-containing protein 1 (266 aa).

The GATA-type zinc-finger motif lies at 9–33; that stretch reads CSMCKTTSSSMWKKSPQGEILCHHC. Low complexity predominate over residues 59 to 72; sequence TTTFATTSAGPSQS. The segment at 59–112 is disordered; sequence TTTFATTSAGPSQSNGGGGGKQSKQEIHRRSARLRNTKYKSAPAAEKKVSTKGK. A Glycyl lysine isopeptide (Lys-Gly) (interchain with G-Cter in SUMO2) cross-link involves residue K259.

As to quaternary structure, component of a chromatin complex, at least composed of KDM5A, GATAD1 and EMSY. In terms of tissue distribution, expressed in the eye (lens, ciliary body, retina, sclera and conjunctiva) at postnatal day 2 and 10. Not detected anywhere at postnatal day 14.

It is found in the nucleus. Functionally, component of some chromatin complex recruited to chromatin sites methylated 'Lys-4' of histone H3 (H3K4me), with a preference for trimethylated form (H3K4me3). The polypeptide is GATA zinc finger domain-containing protein 1 (Gatad1) (Mus musculus (Mouse)).